The following is a 260-amino-acid chain: HTH-type transcriptional repressor NanR (260 aa).

Positions 1-20 (MNPFDSQSEDASDAIGRSLG) are disordered. Residues 27 to 95 (KKLSEMVEEE…NGERARVSRP (69 aa)) enclose the HTH gntR-type domain. The segment at residues 55 to 74 (ERELMAFFNVGRPSVREALA) is a DNA-binding region (H-T-H motif).

It belongs to the NanR family.

In terms of biological role, transcriptional repressor that controls expression of the genes required for the catabolism of sialic acids. This chain is HTH-type transcriptional repressor NanR, found in Cronobacter sakazakii (strain ATCC BAA-894) (Enterobacter sakazakii).